Reading from the N-terminus, the 181-residue chain is Der GTPase-activating protein YihI (181 aa).

The tract at residues 1-73 (MSRIKKARKP…DPRIGSKKPI (73 aa)) is disordered. Residues 22 to 32 (NRTDRDVESRE) show a composition bias toward basic and acidic residues. Positions 33 to 42 (LKRKRKRKGL) are enriched in basic residues. The span at 55-67 (QARRNAQKKDPRI) shows a compositional bias: basic and acidic residues.

It belongs to the YihI family. In terms of assembly, interacts with Der.

In terms of biological role, a GTPase-activating protein (GAP) that modifies Der/EngA GTPase function. May play a role in ribosome biogenesis. The protein is Der GTPase-activating protein YihI of Aliivibrio fischeri (strain MJ11) (Vibrio fischeri).